The chain runs to 246 residues: Small ribosomal subunit protein uS2 (246 aa).

A disordered region spans residues 226 to 246 (QGEEEAEVAEETAPETETTTA). Residues 229–239 (EEAEVAEETAP) show a composition bias toward acidic residues.

It belongs to the universal ribosomal protein uS2 family. In terms of assembly, part of the 30S ribosomal subunit. Interacts with BrxC.

The polypeptide is Small ribosomal subunit protein uS2 (rpsB) (Bacillus subtilis (strain 168)).